Consider the following 459-residue polypeptide: Cysteine--tRNA ligase (459 aa).

Position 28 (C28) interacts with Zn(2+). The 'HIGH' region signature appears at 30 to 40 (VTIYDLCHIGH). Positions 209, 234, and 238 each coordinate Zn(2+). A 'KMSKS' region motif is present at residues 266–270 (KMSKS). K269 serves as a coordination point for ATP.

This sequence belongs to the class-I aminoacyl-tRNA synthetase family. As to quaternary structure, monomer. Requires Zn(2+) as cofactor.

The protein localises to the cytoplasm. It carries out the reaction tRNA(Cys) + L-cysteine + ATP = L-cysteinyl-tRNA(Cys) + AMP + diphosphate. This chain is Cysteine--tRNA ligase, found in Shewanella amazonensis (strain ATCC BAA-1098 / SB2B).